A 515-amino-acid chain; its full sequence is 2-isopropylmalate synthase (515 aa).

Positions 4 to 266 (IKFFDTTLRD…ETRLNLQEIK (263 aa)) constitute a Pyruvate carboxyltransferase domain. Mn(2+) contacts are provided by Asp-13, His-201, His-203, and Asn-237. Residues 391–515 (QLSSIQVQYG…RGENEKVATP (125 aa)) are regulatory domain.

It belongs to the alpha-IPM synthase/homocitrate synthase family. LeuA type 1 subfamily. As to quaternary structure, homodimer. It depends on Mn(2+) as a cofactor.

Its subcellular location is the cytoplasm. It carries out the reaction 3-methyl-2-oxobutanoate + acetyl-CoA + H2O = (2S)-2-isopropylmalate + CoA + H(+). It functions in the pathway amino-acid biosynthesis; L-leucine biosynthesis; L-leucine from 3-methyl-2-oxobutanoate: step 1/4. Catalyzes the condensation of the acetyl group of acetyl-CoA with 3-methyl-2-oxobutanoate (2-ketoisovalerate) to form 3-carboxy-3-hydroxy-4-methylpentanoate (2-isopropylmalate). This is 2-isopropylmalate synthase from Geobacillus kaustophilus (strain HTA426).